The primary structure comprises 287 residues: uncharacterized protein (287 aa).

A run of 2 helical transmembrane segments spans residues 12-32 (IILL…GAAL) and 217-237 (YTIG…VLIV).

It localises to the cell membrane. This is an uncharacterized protein from Mycoplasma pneumoniae (strain ATCC 29342 / M129 / Subtype 1) (Mycoplasmoides pneumoniae).